Consider the following 489-residue polypeptide: Pluviatolide synthase (489 aa).

Residues 6-26 form a helical membrane-spanning segment; the sequence is SVLGLSSTLIIALAITVIFLL. C432 lines the heme pocket.

The protein belongs to the cytochrome P450 family. Requires heme as cofactor.

The protein resides in the membrane. It carries out the reaction (-)-matairesinol + reduced [NADPH--hemoprotein reductase] + O2 = (-)-pluviatolide + oxidized [NADPH--hemoprotein reductase] + 2 H2O + H(+). The protein operates within aromatic compound metabolism; phenylpropanoid biosynthesis. In terms of biological role, cytochrome P450 involved in the biosynthesis of etoposide, a chemotherapeutic compound of the topoisomerase inhibitor family. Catalyzes the conversion of matairesinol to pluviatolide. In Podophyllum peltatum (American mandrake), this protein is Pluviatolide synthase.